A 406-amino-acid polypeptide reads, in one-letter code: 2,3-bisphosphoglycerate-independent phosphoglycerate mutase (406 aa).

Residues V164–D184 form a disordered region.

This sequence belongs to the BPG-independent phosphoglycerate mutase family. A-PGAM subfamily.

The catalysed reaction is (2R)-2-phosphoglycerate = (2R)-3-phosphoglycerate. It participates in carbohydrate degradation; glycolysis; pyruvate from D-glyceraldehyde 3-phosphate: step 3/5. In terms of biological role, catalyzes the interconversion of 2-phosphoglycerate and 3-phosphoglycerate. The sequence is that of 2,3-bisphosphoglycerate-independent phosphoglycerate mutase from Methanocorpusculum labreanum (strain ATCC 43576 / DSM 4855 / Z).